The primary structure comprises 167 residues: Ubiquitin-fold modifier-conjugating enzyme 1 (167 aa).

Cys-116 acts as the Glycyl thioester intermediate in catalysis. Lys-122 participates in a covalent cross-link: Glycyl lysine isopeptide (Lys-Gly) (interchain with G-Cter in UFM1).

The protein belongs to the ubiquitin-conjugating enzyme family. UFC1 subfamily. In terms of assembly, interacts with UBA5 (via C-terminus). Interacts with UFL1. Interacts with UFM1. Interacts with KIRREL3. Post-translationally, ufmylated at Lys-122. Deufmylated by UFSP1.

E2-like enzyme which specifically catalyzes the second step in ufmylation. Accepts the ubiquitin-like modifier UFM1 from the E1 enzyme UBA5 and forms an intermediate with UFM1 via a thioester linkage. Ufmylation is involved in various processes, such as ribosome recycling, response to DNA damage, interferon response or reticulophagy (also called ER-phagy). The chain is Ubiquitin-fold modifier-conjugating enzyme 1 from Rattus norvegicus (Rat).